A 345-amino-acid polypeptide reads, in one-letter code: MDHIQLLNDKIDINLIHQLLIDQSCGACSVFLGTTRDNFEGKNVISLEYEAYENMALKEMGKICTDLRVRWPSLKHIVIYHRLGIVPVSEVSVVIAASAPHRVAALESVNFAIDQLKSRVPIWKKEVYEKDLIGEWKANVECPWPQYSKTSLRTFEFFSCKIDQKTENIPDKLVQIRVDDSELNRRVKCFLKRKRDEINLYNIHDFKQLSTNTELADSSESEVKYSCARTQSSLVKQQQSKSHLKVRREIDNSGPHVRPNYSSQLNKLTTAQHYKNDSFENSMLRNSRLRNIEEYMCVTSDGDNILNRIKNIENKILLLESISPEYKYFVSIFIIVYQMFILSNS.

Substrate-binding positions include 101-102, K117, and 124-126; these read HR and KKE.

Belongs to the MoaE family. MOCS2B subfamily. In terms of assembly, heterotetramer; composed of 2 small (Mocs2A) and 2 large (Mocs2B) subunits.

Its subcellular location is the cytoplasm. It carries out the reaction 2 [molybdopterin-synthase sulfur-carrier protein]-C-terminal-Gly-aminoethanethioate + cyclic pyranopterin phosphate + H2O = molybdopterin + 2 [molybdopterin-synthase sulfur-carrier protein]-C-terminal Gly-Gly + 2 H(+). It participates in cofactor biosynthesis; molybdopterin biosynthesis. Functionally, catalytic subunit of the molybdopterin synthase complex, a complex that catalyzes the conversion of precursor Z into molybdopterin. Acts by mediating the incorporation of 2 sulfur atoms from thiocarboxylated Mocs2A into precursor Z to generate a dithiolene group. This chain is Molybdopterin synthase catalytic subunit, found in Drosophila virilis (Fruit fly).